A 306-amino-acid polypeptide reads, in one-letter code: Pantothenate kinase (306 aa).

G91–S98 provides a ligand contact to ATP.

The protein belongs to the prokaryotic pantothenate kinase family.

It localises to the cytoplasm. The enzyme catalyses (R)-pantothenate + ATP = (R)-4'-phosphopantothenate + ADP + H(+). It participates in cofactor biosynthesis; coenzyme A biosynthesis; CoA from (R)-pantothenate: step 1/5. This Streptococcus agalactiae serotype Ia (strain ATCC 27591 / A909 / CDC SS700) protein is Pantothenate kinase.